Consider the following 447-residue polypeptide: Cysteine--tRNA ligase (447 aa).

Cys28 provides a ligand contact to Zn(2+). Residues 30–40 carry the 'HIGH' region motif; the sequence is PTVYNYIHIGN. Positions 211, 236, and 240 each coordinate Zn(2+). The 'KMSKS' region motif lies at 268 to 272; that stretch reads KMSKS. Lys271 contributes to the ATP binding site.

Belongs to the class-I aminoacyl-tRNA synthetase family. In terms of assembly, monomer. Zn(2+) is required as a cofactor.

It localises to the cytoplasm. It carries out the reaction tRNA(Cys) + L-cysteine + ATP = L-cysteinyl-tRNA(Cys) + AMP + diphosphate. The polypeptide is Cysteine--tRNA ligase (Streptococcus agalactiae serotype III (strain NEM316)).